Reading from the N-terminus, the 457-residue chain is Putative zinc finger CCCH domain-containing protein 21 (457 aa).

Disordered stretches follow at residues 51-73, 102-130, 195-221, and 280-329; these read PTSS…ARAS, LESP…EKLL, TSPS…ERER, and RKQA…RLRV. Residues 57-66 show a composition bias toward gly residues; it reads DGGGGGGGGY. The stretch at 215–276 forms a coiled coil; that stretch reads ASAEREREVR…HLSLLLEELE (62 aa). 2 consecutive C3H1-type zinc fingers follow at residues 382 to 409 and 419 to 447; these read AAKT…HGLQ and RYKT…HSPL.

This is Putative zinc finger CCCH domain-containing protein 21 from Oryza sativa subsp. japonica (Rice).